An 844-amino-acid polypeptide reads, in one-letter code: MVNFTVDEIRGMMDKKRNIRNMSVIAHVDHGKSTLTDSLVSKAGIIAGARAGETRFTDTRKDEQDRCITIKSTAISMFFELEEKDLVFITNPDQREKSEKGFLINLIDSPGHVDFSSEVTAALRVTDGALVVVDCVSGVCVQTETVLRQAIAERIKPILFMNKMDRALLELQLEAEELYQTFQRIVENVNVIIATYNDDGGPMGEVRVDPSKGSVGFGSGLHGWAFTLKQFSEMYADKFKIDLVKLMNRLWGENFFNPQTKKWSKQKDDDNKRSFCMYVLDPIYKVFDAIMKFKKEEIDDLLKKIGVTIKHEDSDKDGKALLKVVMRSWLPAGEALLQMIAIHLPSPVVAQKYRMEMLYEGPHDDEAAIGIKSCDPEAPLMMYVSKMVPTSDKGRFYAFGRVFSGKVVTGQKARIMGPNFTPGKKEDLYEKTIQRTILMMGRYVEAIEDVPSGNICGLVGVDQFLVKTGTITTFKNAHNMKVMKFSVSPVVRVAVEPKNPADLPKLVEGLKRLAKSDPMVQCINEESGEHIVAGAGELHLEICLKDLEEDHACIPIKKSDPVVSYRETVAEESDQLCLSKSPNKHNRLFMKAQPMPDGLPEDIDEGRVNPRDDFKTRARYLTEKYEYDVTEARKIWCFGPEGTGPNILVDCSKGVQYLNEIKDSVVAGFQWAAKEGVMAEENLRGVRFNIYDVTLHTDAIHRGGGQIIPTTRRCLYACLLTAQPRLMEPVYLCEIQCPEVAVGGIYGVLNRRRGHVFEESQVAGTPMFIVKAYLPVNESFGFTADLRSNTGGQAFPQCVFDHWQVLPGDPCEPQSKPYNVVQETRKRKGLKEGLPDLTQYLDKL.

Residues 17 to 348 (RNIRNMSVIA…MIAIHLPSPV (332 aa)) form the tr-type G domain. 26-33 (AHVDHGKS) provides a ligand contact to GTP. T57 and T59 each carry phosphothreonine. GTP contacts are provided by residues 162–165 (NKMD) and 219–221 (SGL). S488 carries the phosphoserine modification. A Diphthamide modification is found at H701.

This sequence belongs to the TRAFAC class translation factor GTPase superfamily. Classic translation factor GTPase family. EF-G/EF-2 subfamily. Post-translationally, phosphorylation by EF-2 kinase completely inactivates EF-2.

It is found in the cytoplasm. It catalyses the reaction GTP + H2O = GDP + phosphate + H(+). Catalyzes the GTP-dependent ribosomal translocation step during translation elongation. During this step, the ribosome changes from the pre-translocational (PRE) to the post-translocational (POST) state as the newly formed A-site-bound peptidyl-tRNA and P-site-bound deacylated tRNA move to the P and E sites, respectively. Catalyzes the coordinated movement of the two tRNA molecules, the mRNA and conformational changes in the ribosome. The chain is Translation elongation factor 2 from Bombyx mori (Silk moth).